Reading from the N-terminus, the 832-residue chain is Protein P (832 aa).

The tract at residues 1 to 177 is terminal protein domain (TP); sequence MPLSYQHFRK…FCGSPYSWEQ (177 aa). A spacer region spans residues 178-335; that stretch reads ELQHGAESFH…YCLSHLVSLL (158 aa). The tract at residues 336–679 is polymerase/reverse transcriptase domain (RT); sequence DDWGPCTEHG…YSTLYPVARQ (344 aa). Residues 346-589 form the Reverse transcriptase domain; sequence EHHIRIPRTP…YSLHFMGYVI (244 aa). Residues D418, D540, and D541 each contribute to the Mg(2+) site.

It belongs to the hepadnaviridae P protein family.

The catalysed reaction is DNA(n) + a 2'-deoxyribonucleoside 5'-triphosphate = DNA(n+1) + diphosphate. It catalyses the reaction Endonucleolytic cleavage to 5'-phosphomonoester.. Its activity is regulated as follows. Activated by host HSP70 and HSP40 in vitro to be able to bind the epsilon loop of the pgRNA. Because deletion of the RNase H region renders the protein partly chaperone-independent, the chaperones may be needed indirectly to relieve occlusion of the RNA-binding site by this domain. Inhibited by several reverse-transcriptase inhibitors: Lamivudine, Adefovir and Entecavir. In terms of biological role, multifunctional enzyme that converts the viral RNA genome into dsDNA in viral cytoplasmic capsids. This enzyme displays a DNA polymerase activity that can copy either DNA or RNA templates, and a ribonuclease H (RNase H) activity that cleaves the RNA strand of RNA-DNA heteroduplexes in a partially processive 3'- to 5'-endonucleasic mode. Neo-synthesized pregenomic RNA (pgRNA) are encapsidated together with the P protein, and reverse-transcribed inside the nucleocapsid. Initiation of reverse-transcription occurs first by binding the epsilon loop on the pgRNA genome, and is initiated by protein priming, thereby the 5'-end of (-)DNA is covalently linked to P protein. Partial (+)DNA is synthesized from the (-)DNA template and generates the relaxed circular DNA (RC-DNA) genome. After budding and infection, the RC-DNA migrates in the nucleus, and is converted into a plasmid-like covalently closed circular DNA (cccDNA). The activity of P protein does not seem to be necessary for cccDNA generation, and is presumably released from (+)DNA by host nuclear DNA repair machinery. The chain is Protein P from Pan troglodytes (Chimpanzee).